Here is a 105-residue protein sequence, read N- to C-terminus: Putative ferredoxin-3 (105 aa).

2 consecutive 4Fe-4S ferredoxin-type domains span residues 17–46 and 70–100; these read YLTA…LHGI and TIMV…HVAA. [4Fe-4S] cluster contacts are provided by Cys-26, Cys-29, Cys-32, Cys-36, Cys-80, Cys-83, Cys-86, and Cys-90.

The cofactor is [4Fe-4S] cluster.

Functionally, ferredoxins are iron-sulfur proteins that transfer electrons in a wide variety of metabolic reactions. The protein is Putative ferredoxin-3 (fdxB) of Sinorhizobium fredii (strain NBRC 101917 / NGR234).